The sequence spans 350 residues: FAD:protein FMN transferase (350 aa).

The N-terminal stretch at 1 to 19 is a signal peptide; the sequence is MKMTFCRAVCLAAAFLLMG. A lipid anchor (N-palmitoyl cysteine) is attached at C20. C20 is lipidated: S-diacylglycerol cysteine. Residues M41, Y78, 119-121, and D181 each bind FAD; that span reads AMD. Position 184 (T184) interacts with Mg(2+). FAD contacts are provided by E187 and I272. D298, D301, and T302 together coordinate Mg(2+).

Belongs to the ApbE family. Homodimer. Mg(2+) serves as cofactor.

The protein resides in the cell inner membrane. It catalyses the reaction L-threonyl-[protein] + FAD = FMN-L-threonyl-[protein] + AMP + H(+). In terms of biological role, flavin transferase that catalyzes the transfer of the FMN moiety of FAD and its covalent binding to the hydroxyl group of a threonine residue in a target flavoprotein such as NqrB and NqrC, two subunits of the NQR complex. The chain is FAD:protein FMN transferase from Salmonella typhimurium (strain LT2 / SGSC1412 / ATCC 700720).